The chain runs to 615 residues: uncharacterized protein (615 aa).

The active-site Proton acceptor is the Asp403. Glu406 acts as the Proton donor in catalysis.

It belongs to the glycosyl hydrolase 15 family.

This is an uncharacterized protein from Methanocaldococcus jannaschii (strain ATCC 43067 / DSM 2661 / JAL-1 / JCM 10045 / NBRC 100440) (Methanococcus jannaschii).